We begin with the raw amino-acid sequence, 311 residues long: Ferrochelatase (311 aa).

Fe cation is bound by residues H179 and E260.

This sequence belongs to the ferrochelatase family.

The protein resides in the cytoplasm. It catalyses the reaction heme b + 2 H(+) = protoporphyrin IX + Fe(2+). It participates in porphyrin-containing compound metabolism; protoheme biosynthesis; protoheme from protoporphyrin-IX: step 1/1. Its function is as follows. Catalyzes the ferrous insertion into protoporphyrin IX. The sequence is that of Ferrochelatase from Helicobacter hepaticus (strain ATCC 51449 / 3B1).